Here is a 1103-residue protein sequence, read N- to C-terminus: Ataxin-2 homolog (1103 aa).

Basic residues predominate over residues 1–10 (MSQSKDKKKF). Residues 1-75 (MSQSKDKKKF…QQQQQQQQPF (75 aa)) are disordered. Over residues 11–28 (VGGGGGGGGNNSGGGGYG) the composition is skewed to gly residues. Low complexity-rich tracts occupy residues 33 to 44 (NNNNNNRNSSNN) and 56 to 73 (HHQQQQQQQQQQQQQQQQ). Residues 84 to 166 (RTVFMSMSLV…FLQITATGVV (83 aa)) enclose the Sm domain. A coiled-coil region spans residues 258 to 287 (EFYKINQSVAEKKAQEIENEKSGNIHLLEE). 5 disordered regions span residues 305–474 (VVRK…RESP), 516–557 (TNKS…APKS), 615–763 (LVIK…NNTT), 901–920 (HTMKPPGSLQPGGGGVVQPQ), and 930–1103 (QPQG…NQYH). The span at 312–356 (PTSTTSTTTSPPTQNPTPSSSVYIPPSKRNNNNNTPSTPSVTSPP) shows a compositional bias: low complexity. Residues 358 to 371 (VDKKHQQTHQDKKQ) are compositionally biased toward basic and acidic residues. Positions 366-403 (HQDKKQTQQQQQQQQQQQQQQQQQQQQQQQQQQQQQTQ) form a coiled coil. Over residues 372 to 463 (TQQQQQQQQQ…NNTPTATNTN (92 aa)) the composition is skewed to low complexity. Residues 516–529 (TNKSMNKSGSNIST) show a composition bias toward polar residues. Composition is skewed to low complexity over residues 530-544 (TPVNGSGNVGPNGTP), 637-676 (PTQLSLSGSSTSTNTSTTSPPTTNTTTTTTTATNSTTPST), and 683-694 (TTTPITTTILTE). Residues 691–730 (ILTENKSDDKEKEKEKEKEKVDEKEKEKEKEKSDEKDKDQ) are a coiled coil. Basic and acidic residues predominate over residues 695–741 (NKSDDKEKEKEKEKEKVDEKEKEKEKEKSDEKDKDQSSTLVEKKDES). A compositionally biased stretch (low complexity) spans 742-763 (SSSSNTTTTTTNTTNNNNNNTT). Residues 930-957 (QPQGGVVQPSAGGAPKTMYQQQQQQQQQ) are compositionally biased toward low complexity. Residues 960-969 (QPGGPMGVQR) are compositionally biased toward gly residues. Residues 974 to 984 (PPQQQPQQQQQ) show a composition bias toward low complexity. The segment covering 1020-1031 (YAVPHPQYPMPP) has biased composition (pro residues). Over residues 1062–1076 (QVVSQNSPQQDSPSN) the composition is skewed to low complexity.

Belongs to the ataxin-2 family.

This chain is Ataxin-2 homolog (atxn2), found in Dictyostelium discoideum (Social amoeba).